A 443-amino-acid chain; its full sequence is ATP-dependent protease ATPase subunit HslU (443 aa).

ATP-binding positions include Ile18, 60–65 (GVGKTE), Asp256, Glu321, and Arg393.

It belongs to the ClpX chaperone family. HslU subfamily. In terms of assembly, a double ring-shaped homohexamer of HslV is capped on each side by a ring-shaped HslU homohexamer. The assembly of the HslU/HslV complex is dependent on binding of ATP.

The protein resides in the cytoplasm. In terms of biological role, ATPase subunit of a proteasome-like degradation complex; this subunit has chaperone activity. The binding of ATP and its subsequent hydrolysis by HslU are essential for unfolding of protein substrates subsequently hydrolyzed by HslV. HslU recognizes the N-terminal part of its protein substrates and unfolds these before they are guided to HslV for hydrolysis. This is ATP-dependent protease ATPase subunit HslU from Photorhabdus laumondii subsp. laumondii (strain DSM 15139 / CIP 105565 / TT01) (Photorhabdus luminescens subsp. laumondii).